Here is a 250-residue protein sequence, read N- to C-terminus: uncharacterized protein (250 aa).

Residues E97, E99, and D128 each contribute to the a divalent metal cation site.

It belongs to the FAH family.

This is an uncharacterized protein from Archaeoglobus fulgidus (strain ATCC 49558 / DSM 4304 / JCM 9628 / NBRC 100126 / VC-16).